A 560-amino-acid chain; its full sequence is DNA ligase B (560 aa).

The N6-AMP-lysine intermediate role is filled by K124.

The protein belongs to the NAD-dependent DNA ligase family. LigB subfamily.

It catalyses the reaction NAD(+) + (deoxyribonucleotide)n-3'-hydroxyl + 5'-phospho-(deoxyribonucleotide)m = (deoxyribonucleotide)n+m + AMP + beta-nicotinamide D-nucleotide.. Its function is as follows. Catalyzes the formation of phosphodiester linkages between 5'-phosphoryl and 3'-hydroxyl groups in double-stranded DNA using NAD as a coenzyme and as the energy source for the reaction. In Escherichia coli (strain K12 / DH10B), this protein is DNA ligase B.